The sequence spans 192 residues: Adenylate kinase (192 aa).

Residue 10 to 15 (GAGKGT) participates in ATP binding. The tract at residues 30 to 59 (STGDMLREAIEKETEIGKQAKIFIESGALV) is NMP. Residues T31, R36, 57–59 (ALV), 85–88 (GYPR), and Q92 each bind AMP. Residues 126–142 (KRVEEVVAVGGKIRSDD) are LID. R127 contributes to the ATP binding site. AMP contacts are provided by R139 and R150. A178 is an ATP binding site.

This sequence belongs to the adenylate kinase family. In terms of assembly, monomer.

It is found in the cytoplasm. It carries out the reaction AMP + ATP = 2 ADP. It participates in purine metabolism; AMP biosynthesis via salvage pathway; AMP from ADP: step 1/1. Its function is as follows. Catalyzes the reversible transfer of the terminal phosphate group between ATP and AMP. Plays an important role in cellular energy homeostasis and in adenine nucleotide metabolism. This Bartonella bacilliformis (strain ATCC 35685 / KC583 / Herrer 020/F12,63) protein is Adenylate kinase.